The primary structure comprises 336 residues: Glycerol-3-phosphate dehydrogenase [NAD(P)+] (336 aa).

Positions 11, 33, and 105 each coordinate NADPH. Positions 105, 141, and 143 each coordinate sn-glycerol 3-phosphate. Residue Ala145 participates in NADPH binding. Residues Lys196, Asp249, Ser259, Arg260, and Asn261 each contribute to the sn-glycerol 3-phosphate site. Lys196 (proton acceptor) is an active-site residue. An NADPH-binding site is contributed by Arg260. Residues Val284 and Glu286 each contribute to the NADPH site.

This sequence belongs to the NAD-dependent glycerol-3-phosphate dehydrogenase family.

It localises to the cytoplasm. The catalysed reaction is sn-glycerol 3-phosphate + NAD(+) = dihydroxyacetone phosphate + NADH + H(+). It catalyses the reaction sn-glycerol 3-phosphate + NADP(+) = dihydroxyacetone phosphate + NADPH + H(+). It functions in the pathway membrane lipid metabolism; glycerophospholipid metabolism. In terms of biological role, catalyzes the reduction of the glycolytic intermediate dihydroxyacetone phosphate (DHAP) to sn-glycerol 3-phosphate (G3P), the key precursor for phospholipid synthesis. This Delftia acidovorans (strain DSM 14801 / SPH-1) protein is Glycerol-3-phosphate dehydrogenase [NAD(P)+].